A 379-amino-acid chain; its full sequence is MALDLLSSYAPGLVESLLTWKGAAGLAAAVALGYIIISNLPGRQVAKPSLLQVRTGGVAFEKVAEVVADYSDSYGQTEKGELIVKDNNKIVSLANTFYDLITDGYEWGWGSGFHFSHRLPGMSFNASQLLHESRMASFLRLKPGMQVLDVGCGVGNPGRTVAACSGAVVTGITINAYQIKRAELHTKRAGLVGYFKPVQGNFCAMPFQDKSFDAAFAMDSTCHAPKLEDVYSEVFRVLKPGAYFATYEWVSTKNYDSNNPEHVKCMNSIILGNGLPNIRSWKQAEEAGKNVGFNLLTSLDMATNSPIGKPWYSVPERMVNWGLFRFHKACIRTASTLHLLPPESWKFFYILAEMAENLVKGGQWDIFTPMHLLIFQKPE.

A helical membrane pass occupies residues 17–37 (LLTWKGAAGLAAAVALGYIII).

This sequence belongs to the class I-like SAM-binding methyltransferase superfamily. Erg6/SMT family.

The protein localises to the microsome membrane. It carries out the reaction C30 botryococcene + 2 S-adenosyl-L-methionine = 3,20-dimethyl-1,2,21,22-tetradehydro-2,3,20,21-tetrahydrobotryococcene + 2 S-adenosyl-L-homocysteine + 2 H(+). Functionally, converts botryococcene to mono- and dimethyl derivatives, but not to tri- and tetramethylated products. Unable to methylate cycloartenol, zymosterol or lanosterol, but can also use squalene as substrate. Methylates both C-3 and C22 positions, but only C-3 position in monomethylated squalenes. In contrast, monomethylated botryococcene occured mainly at the C-20 position yielding showacene, but also at the C-3 position yielding isoshowacene. This is Botryococcene C-methyltransferase (TMT-3) from Botryococcus braunii (Green alga).